We begin with the raw amino-acid sequence, 350 residues long: C5a anaphylatoxin chemotactic receptor 1 (350 aa).

The Extracellular segment spans residues 1-37 (MDDMCSILTEEELSLYNITDCEFVKPGGLGPVLGPRH). Residue N17 is glycosylated (N-linked (GlcNAc...) asparagine). A helical membrane pass occupies residues 38 to 64 (LSALVFYGLVFLLGVPGNALVVWVTGF). Residues 65–69 (RMPRS) lie on the Cytoplasmic side of the membrane. A helical transmembrane segment spans residues 70-93 (VTSLWFLNLALADLLCCLSLPLLM). The Extracellular segment spans residues 94–110 (VPLAMDQHWPFGPVACK). C109 and C187 form a disulfide bridge. A helical membrane pass occupies residues 111 to 132 (LLKGLLYLIMFCSVLLLVLISL). The Cytoplasmic segment spans residues 133–154 (DRFLLVSWPVWCQNWRRPRKAG). The helical transmembrane segment at 155 to 174 (WVCVGVWLLALLGSIPQFVY) threads the bilayer. The Extracellular segment spans residues 175-197 (VKEVQLSTSKSECLGLYTVASAW). Residues 198 to 223 (ANTTARFLVGFVLPFITIVTCHWVVY) traverse the membrane as a helical segment. Over 224 to 247 (SRARRGSGVGPGRVSEARSRRTLR) the chain is Cytoplasmic. A helical membrane pass occupies residues 248-270 (VIVAVSLSFFLCWFPLHILDFLV). The Extracellular portion of the chain corresponds to 271 to 287 (LSTPRHSSHSANIQLAH). Residues 288–308 (TLALCLAYCNSCLNPLLYVCL) form a helical membrane-spanning segment. At 309-350 (GRGFKQNINRSLRNMFNFATEESVTRQSMFKSTSERTQEMNM) the chain is on the cytoplasmic side.

This sequence belongs to the G-protein coupled receptor 1 family. As to expression, high expression in head, kidney and posterior kidney, lower levels in peripheral blood leukocytes and spleen, low expression in brain and gills, heart, intestine and very low expression in liver and muscle.

It localises to the cell membrane. In terms of biological role, receptor for the chemotactic and inflammatory peptide anaphylatoxin C5a. This receptor stimulates chemotaxis, granule enzyme release and superoxide anion production. The chain is C5a anaphylatoxin chemotactic receptor 1 (c5ar1) from Oncorhynchus mykiss (Rainbow trout).